The chain runs to 160 residues: Small ribosomal subunit protein uS7 (160 aa).

This sequence belongs to the universal ribosomal protein uS7 family. In terms of assembly, part of the 30S ribosomal subunit. Contacts proteins S9 and S11.

Its function is as follows. One of the primary rRNA binding proteins, it binds directly to 16S rRNA where it nucleates assembly of the head domain of the 30S subunit. Is located at the subunit interface close to the decoding center, probably blocks exit of the E-site tRNA. The chain is Small ribosomal subunit protein uS7 from Rickettsia massiliae (strain Mtu5).